Here is an 82-residue protein sequence, read N- to C-terminus: U6 snRNA-associated Sm-like protein LSm6 (82 aa).

The 70-residue stretch at 13-82 (DPSGFLSEII…GNNVMYISAD (70 aa)) folds into the Sm domain.

This sequence belongs to the snRNP Sm proteins family. SmF/LSm6 subfamily. As to quaternary structure, component of the heptameric LSM1-LSM7 complex, which consists of snr-1/lsm1, snr-2/lsm2, snr-3/lsm3, snr-4/lsm4, snr-5/lsm5, snr-6/lsm6 and snr-7/lsm7. Component of the heptameric LSM2-LSM8 complex, which consists of snr-2/lsm2, snr-3/lsm3, snr-4/lsm4, snr-5/lsm5, snr-6/lsm6, snr-7/lsm7 and snr-8/lsm8. The LSm subunits form a seven-membered ring structure with a doughnut shape.

Its subcellular location is the cytoplasm. The protein localises to the nucleus. Its function is as follows. Component of LSm protein complexes, which are involved in RNA processing and may function in a chaperone-like manner, facilitating the efficient association of RNA processing factors with their substrates. Component of the cytoplasmic LSM1-LSM7 complex, which is thought to be involved in mRNA degradation by activating the decapping step in the 5'-to-3' mRNA decay pathway. Component of the nuclear LSM2-LSM8 complex, which is involved in splicing of nuclear mRNAs. LSM2-LSM8 associates with multiple snRNP complexes containing the U6 snRNA (U4/U6 di-snRNP, spliceosomal U4/U6.U5 tri-snRNP, and free U6 snRNP). It binds directly to the 3'-terminal U-tract of U6 snRNA and plays a role in the biogenesis and stability of the U6 snRNP and U4/U6 snRNP complexes. LSM2-LSM8 probably also is involved degradation of nuclear pre-mRNA by targeting them for decapping, and in processing of pre-tRNAs, pre-rRNAs and U3 snoRNA. The polypeptide is U6 snRNA-associated Sm-like protein LSm6 (snr-6) (Neurospora crassa (strain ATCC 24698 / 74-OR23-1A / CBS 708.71 / DSM 1257 / FGSC 987)).